Here is a 111-residue protein sequence, read N- to C-terminus: Putative pterin-4-alpha-carbinolamine dehydratase (111 aa).

The protein belongs to the pterin-4-alpha-carbinolamine dehydratase family.

The enzyme catalyses (4aS,6R)-4a-hydroxy-L-erythro-5,6,7,8-tetrahydrobiopterin = (6R)-L-erythro-6,7-dihydrobiopterin + H2O. The sequence is that of Putative pterin-4-alpha-carbinolamine dehydratase from Chlorobaculum tepidum (strain ATCC 49652 / DSM 12025 / NBRC 103806 / TLS) (Chlorobium tepidum).